We begin with the raw amino-acid sequence, 287 residues long: MSWLEKILPKSKITTPRRHNIPEGVWTKCSACEQVLYRAELERNLEVCPKCDHHMRISARARLESFLDEQGRTEVGAELEPQDILKFKDSKRYKDRLSAAQKATGEKDALVVMKGTLKGVPVVACSFEFSFIGGSMSSVVGARFVRAVEECIKEGRGLVCFSASGGARMQEALFSLMQMAKTSAALDRLTKAGLPYISVLTDPTMGGVSASLAMLGDINVGEPKALIGFAGPRVIEQTVREKLPEGFQRSEFLLEKGAIDLIIDRREMRNRLASLLAKMLNTHVIEE.

Residues 25–287 enclose the CoA carboxyltransferase N-terminal domain; sequence VWTKCSACEQ…KMLNTHVIEE (263 aa). Zn(2+) contacts are provided by Cys-29, Cys-32, Cys-48, and Cys-51. The C4-type zinc finger occupies 29 to 51; sequence CSACEQVLYRAELERNLEVCPKC.

It belongs to the AccD/PCCB family. In terms of assembly, acetyl-CoA carboxylase is a heterohexamer composed of biotin carboxyl carrier protein (AccB), biotin carboxylase (AccC) and two subunits each of ACCase subunit alpha (AccA) and ACCase subunit beta (AccD). Zn(2+) is required as a cofactor.

The protein localises to the cytoplasm. The enzyme catalyses N(6)-carboxybiotinyl-L-lysyl-[protein] + acetyl-CoA = N(6)-biotinyl-L-lysyl-[protein] + malonyl-CoA. It functions in the pathway lipid metabolism; malonyl-CoA biosynthesis; malonyl-CoA from acetyl-CoA: step 1/1. Its function is as follows. Component of the acetyl coenzyme A carboxylase (ACC) complex. Biotin carboxylase (BC) catalyzes the carboxylation of biotin on its carrier protein (BCCP) and then the CO(2) group is transferred by the transcarboxylase to acetyl-CoA to form malonyl-CoA. The sequence is that of Acetyl-coenzyme A carboxylase carboxyl transferase subunit beta from Aeromonas salmonicida (strain A449).